The sequence spans 117 residues: Immunoglobulin kappa variable 1-9 (117 aa).

A signal peptide spans 1–22 (MDMRVPAQLLGLLLLWLPGARC). The interval 23 to 45 (DIQLTQSPSFLSASVGDRVTITC) is framework-1. The region spanning 24–117 (IQLTQSPSFL…YYCQQLNSYP (94 aa)) is the Ig-like domain. The cysteines at positions 45 and 110 are disulfide-linked. The tract at residues 46–56 (RASQGISSYLA) is complementarity-determining-1. The interval 57-71 (WYQQKPGKAPKLLIY) is framework-2. Residues 72 to 78 (AASTLQS) are complementarity-determining-2. Positions 79–110 (GVPSRFSGSGSGTEFTLTISSLQPEDFATYYC) are framework-3. Residues 111–117 (QQLNSYP) are complementarity-determining-3.

Immunoglobulins are composed of two identical heavy chains and two identical light chains; disulfide-linked.

The protein localises to the secreted. It localises to the cell membrane. Functionally, v region of the variable domain of immunoglobulin light chains that participates in the antigen recognition. Immunoglobulins, also known as antibodies, are membrane-bound or secreted glycoproteins produced by B lymphocytes. In the recognition phase of humoral immunity, the membrane-bound immunoglobulins serve as receptors which, upon binding of a specific antigen, trigger the clonal expansion and differentiation of B lymphocytes into immunoglobulins-secreting plasma cells. Secreted immunoglobulins mediate the effector phase of humoral immunity, which results in the elimination of bound antigens. The antigen binding site is formed by the variable domain of one heavy chain, together with that of its associated light chain. Thus, each immunoglobulin has two antigen binding sites with remarkable affinity for a particular antigen. The variable domains are assembled by a process called V-(D)-J rearrangement and can then be subjected to somatic hypermutations which, after exposure to antigen and selection, allow affinity maturation for a particular antigen. This chain is Immunoglobulin kappa variable 1-9, found in Homo sapiens (Human).